A 104-amino-acid polypeptide reads, in one-letter code: Ribonuclease P protein component 4 (104 aa).

Positions 63, 66, 89, and 92 each coordinate Zn(2+).

This sequence belongs to the eukaryotic/archaeal RNase P protein component 4 family. In terms of assembly, consists of a catalytic RNA component and at least 4-5 protein subunits. The cofactor is Zn(2+).

The protein localises to the cytoplasm. The enzyme catalyses Endonucleolytic cleavage of RNA, removing 5'-extranucleotides from tRNA precursor.. In terms of biological role, part of ribonuclease P, a protein complex that generates mature tRNA molecules by cleaving their 5'-ends. The polypeptide is Ribonuclease P protein component 4 (Methanosphaera stadtmanae (strain ATCC 43021 / DSM 3091 / JCM 11832 / MCB-3)).